The following is a 283-amino-acid chain: HTH-type transcriptional activator RhaR (283 aa).

Residues Asp-179–Gln-277 enclose the HTH araC/xylS-type domain. 2 DNA-binding regions (H-T-H motif) span residues Gln-196–Thr-217 and Ile-244–Thr-267.

Binds DNA as a dimer.

It localises to the cytoplasm. Its function is as follows. Activates expression of the rhaSR operon in response to L-rhamnose. The chain is HTH-type transcriptional activator RhaR from Cronobacter sakazakii (strain ATCC BAA-894) (Enterobacter sakazakii).